We begin with the raw amino-acid sequence, 101 residues long: NADH-quinone oxidoreductase subunit K (101 aa).

A run of 3 helical transmembrane segments spans residues 4–24, 30–50, and 62–82; these read LGHL…GIFL, IVLL…FIAF, and FVFF…AILV.

The protein belongs to the complex I subunit 4L family. NDH-1 is composed of 14 different subunits. Subunits NuoA, H, J, K, L, M, N constitute the membrane sector of the complex.

It localises to the cell inner membrane. It catalyses the reaction a quinone + NADH + 5 H(+)(in) = a quinol + NAD(+) + 4 H(+)(out). Its function is as follows. NDH-1 shuttles electrons from NADH, via FMN and iron-sulfur (Fe-S) centers, to quinones in the respiratory chain. The immediate electron acceptor for the enzyme in this species is believed to be ubiquinone. Couples the redox reaction to proton translocation (for every two electrons transferred, four hydrogen ions are translocated across the cytoplasmic membrane), and thus conserves the redox energy in a proton gradient. The protein is NADH-quinone oxidoreductase subunit K of Xylella fastidiosa (strain 9a5c).